The chain runs to 333 residues: Lipoyl synthase (333 aa).

A disordered region spans residues 1 to 29 (MTDSASGASAVANIATPSNEPYDATRKQK). Residues Cys-80, Cys-85, Cys-91, Cys-106, Cys-110, Cys-113, and Ser-320 each coordinate [4Fe-4S] cluster. Residues 91–309 (CFGKGTATFM…EEKAYEMGFT (219 aa)) enclose the Radical SAM core domain.

The protein belongs to the radical SAM superfamily. Lipoyl synthase family. The cofactor is [4Fe-4S] cluster.

It is found in the cytoplasm. It carries out the reaction [[Fe-S] cluster scaffold protein carrying a second [4Fe-4S](2+) cluster] + N(6)-octanoyl-L-lysyl-[protein] + 2 oxidized [2Fe-2S]-[ferredoxin] + 2 S-adenosyl-L-methionine + 4 H(+) = [[Fe-S] cluster scaffold protein] + N(6)-[(R)-dihydrolipoyl]-L-lysyl-[protein] + 4 Fe(3+) + 2 hydrogen sulfide + 2 5'-deoxyadenosine + 2 L-methionine + 2 reduced [2Fe-2S]-[ferredoxin]. Its pathway is protein modification; protein lipoylation via endogenous pathway; protein N(6)-(lipoyl)lysine from octanoyl-[acyl-carrier-protein]: step 2/2. Functionally, catalyzes the radical-mediated insertion of two sulfur atoms into the C-6 and C-8 positions of the octanoyl moiety bound to the lipoyl domains of lipoate-dependent enzymes, thereby converting the octanoylated domains into lipoylated derivatives. This chain is Lipoyl synthase, found in Ralstonia nicotianae (strain ATCC BAA-1114 / GMI1000) (Ralstonia solanacearum).